The primary structure comprises 732 residues: Catalase-peroxidase (732 aa).

Residues 97 to 220 (WHSAGTYRTG…LAAVQMGLIY (124 aa)) constitute a cross-link (tryptophyl-tyrosyl-methioninium (Trp-Tyr) (with M-246)). H98 acts as the Proton acceptor in catalysis. Residues 220 to 246 (YVNPEGPDGKPDPVAAGKDIRETFGRM) constitute a cross-link (tryptophyl-tyrosyl-methioninium (Tyr-Met) (with W-97)). Heme b is bound at residue H261.

The protein belongs to the peroxidase family. Peroxidase/catalase subfamily. As to quaternary structure, homodimer or homotetramer. Requires heme b as cofactor. In terms of processing, formation of the three residue Trp-Tyr-Met cross-link is important for the catalase, but not the peroxidase activity of the enzyme.

It carries out the reaction H2O2 + AH2 = A + 2 H2O. It catalyses the reaction 2 H2O2 = O2 + 2 H2O. Bifunctional enzyme with both catalase and broad-spectrum peroxidase activity. The polypeptide is Catalase-peroxidase (Chlorobium phaeobacteroides (strain BS1)).